We begin with the raw amino-acid sequence, 55 residues long: Large ribosomal subunit protein bL33 (55 aa).

It belongs to the bacterial ribosomal protein bL33 family.

This Sodalis glossinidius (strain morsitans) protein is Large ribosomal subunit protein bL33.